Reading from the N-terminus, the 476-residue chain is Aspartyl/glutamyl-tRNA(Asn/Gln) amidotransferase subunit B (476 aa).

The protein belongs to the GatB/GatE family. GatB subfamily. As to quaternary structure, heterotrimer of A, B and C subunits.

The catalysed reaction is L-glutamyl-tRNA(Gln) + L-glutamine + ATP + H2O = L-glutaminyl-tRNA(Gln) + L-glutamate + ADP + phosphate + H(+). The enzyme catalyses L-aspartyl-tRNA(Asn) + L-glutamine + ATP + H2O = L-asparaginyl-tRNA(Asn) + L-glutamate + ADP + phosphate + 2 H(+). Its function is as follows. Allows the formation of correctly charged Asn-tRNA(Asn) or Gln-tRNA(Gln) through the transamidation of misacylated Asp-tRNA(Asn) or Glu-tRNA(Gln) in organisms which lack either or both of asparaginyl-tRNA or glutaminyl-tRNA synthetases. The reaction takes place in the presence of glutamine and ATP through an activated phospho-Asp-tRNA(Asn) or phospho-Glu-tRNA(Gln). The protein is Aspartyl/glutamyl-tRNA(Asn/Gln) amidotransferase subunit B of Clostridium kluyveri (strain ATCC 8527 / DSM 555 / NBRC 12016 / NCIMB 10680 / K1).